We begin with the raw amino-acid sequence, 112 residues long: T cell receptor alpha variable 13-1 (112 aa).

An N-terminal signal peptide occupies residues 1–20 (MTSIRAVFIFLWLQLDLVNG). The Ig-like domain maps to 21–112 (ENVEQHPSTL…DSAVYFCAAS (92 aa)). Cysteine 42 and cysteine 109 are disulfide-bonded. Asparagine 86 is a glycosylation site (N-linked (GlcNAc...) asparagine).

Alpha-beta TR is a heterodimer composed of an alpha and beta chain; disulfide-linked. The alpha-beta TR is associated with the transmembrane signaling CD3 coreceptor proteins to form the TR-CD3 (TcR or TCR). The assembly of alpha-beta TR heterodimers with CD3 occurs in the endoplasmic reticulum where a single alpha-beta TR heterodimer associates with one CD3D-CD3E heterodimer, one CD3G-CD3E heterodimer and one CD247 homodimer forming a stable octameric structure. CD3D-CD3E and CD3G-CD3E heterodimers preferentially associate with TR alpha and TR beta chains, respectively. The association of the CD247 homodimer is the last step of TcR assembly in the endoplasmic reticulum and is required for transport to the cell surface.

The protein resides in the cell membrane. In terms of biological role, v region of the variable domain of T cell receptor (TR) alpha chain that participates in the antigen recognition. Alpha-beta T cell receptors are antigen specific receptors which are essential to the immune response and are present on the cell surface of T lymphocytes. Recognize peptide-major histocompatibility (MH) (pMH) complexes that are displayed by antigen presenting cells (APC), a prerequisite for efficient T cell adaptive immunity against pathogens. Binding of alpha-beta TR to pMH complex initiates TR-CD3 clustering on the cell surface and intracellular activation of LCK that phosphorylates the ITAM motifs of CD3G, CD3D, CD3E and CD247 enabling the recruitment of ZAP70. In turn ZAP70 phosphorylates LAT, which recruits numerous signaling molecules to form the LAT signalosome. The LAT signalosome propagates signal branching to three major signaling pathways, the calcium, the mitogen-activated protein kinase (MAPK) kinase and the nuclear factor NF-kappa-B (NF-kB) pathways, leading to the mobilization of transcription factors that are critical for gene expression and essential for T cell growth and differentiation. The T cell repertoire is generated in the thymus, by V-(D)-J rearrangement. This repertoire is then shaped by intrathymic selection events to generate a peripheral T cell pool of self-MH restricted, non-autoaggressive T cells. Post-thymic interaction of alpha-beta TR with the pMH complexes shapes TR structural and functional avidity. This chain is T cell receptor alpha variable 13-1, found in Homo sapiens (Human).